Here is a 332-residue protein sequence, read N- to C-terminus: tRNA dimethylallyltransferase (332 aa).

Position 14-21 (14-21 (GPTASGKT)) interacts with ATP. 16–21 (TASGKT) serves as a coordination point for substrate. The segment at 39 to 42 (DSMQ) is interaction with substrate tRNA. Positions 313 to 332 (KRSSKHDCKPQHPRSSTREL) are disordered. Positions 317–332 (KHDCKPQHPRSSTREL) are enriched in basic and acidic residues.

It belongs to the IPP transferase family. As to quaternary structure, monomer. The cofactor is Mg(2+).

It catalyses the reaction adenosine(37) in tRNA + dimethylallyl diphosphate = N(6)-dimethylallyladenosine(37) in tRNA + diphosphate. Catalyzes the transfer of a dimethylallyl group onto the adenine at position 37 in tRNAs that read codons beginning with uridine, leading to the formation of N6-(dimethylallyl)adenosine (i(6)A). The polypeptide is tRNA dimethylallyltransferase (Staphylococcus haemolyticus (strain JCSC1435)).